We begin with the raw amino-acid sequence, 1149 residues long: Potassium channel subfamily U member 1 (1149 aa).

Over 1 to 24 the chain is Extracellular; that stretch reads MFQTKLRNETWEDLPKMSCTTEIQ. Residues 25 to 45 form a helical membrane-spanning segment; the sequence is AAFILSSFVTFFSGLIILLIF. Over 46–101 the chain is Cytoplasmic; the sequence is RLIWRSVKKWQIIKGTGIILELFTSGTIARSHVRSLHFQGQFRDHIEMLLSAQTFV. The helical transmembrane segment at 102–122 threads the bilayer; it reads GQVLVILVFVLSIGSLIIYFI. Over 123 to 138 the chain is Extracellular; sequence NSADPVGSCSSYEDKT. A helical membrane pass occupies residues 139–159; sequence IPIDLVFNAFFSFYFGLRFMA. Residues 160 to 163 lie on the Cytoplasmic side of the membrane; it reads ADDK. Residues 164-184 form a helical membrane-spanning segment; the sequence is IKFWLEMNSIVDIFTIPPTFI. At 185-188 the chain is on the extracellular side; the sequence is SYYL. A helical; Voltage-sensor transmembrane segment spans residues 189-209; sequence KSNWLGLRFLRALRLLELPQI. Residues 210 to 226 are Cytoplasmic-facing; sequence LQILRAIKTSNSVKFSK. A helical membrane pass occupies residues 227–247; the sequence is LLSIILSTWFTAAGFIHLVEN. Residues 248–259 lie on the Extracellular side of the membrane; the sequence is SGDPWLKGRNSQ. Residues 260–282 constitute an intramembrane region (pore-forming); the sequence is NISYFESIYLVMATTSTVGFGDV. Positions 276 to 279 match the Selectivity for potassium motif; the sequence is TVGF. Over 283 to 291 the chain is Extracellular; sequence VAKTSLGRT. A helical membrane pass occupies residues 292–312; that stretch reads FIMFFTLGSLILFANYIPEMV. Residues 313–1149 lie on the Cytoplasmic side of the membrane; the sequence is ELFANKRKYT…EDPFAYSEPL (837 aa). RCK N-terminal domains are found at residues 331–473 and 713–884; these read KKFI…DNII and RNHI…EGSL. 2 disordered regions span residues 828–854 and 1118–1149; these read QIDSSSDPSPSVSEETPGYTNGHNEKS and SQIPLGDNAKENERKTSDEVYDEDPFAYSEPL. Residues 830–840 show a composition bias toward low complexity; it reads DSSSDPSPSVS. Over residues 1125–1135 the composition is skewed to basic and acidic residues; the sequence is NAKENERKTSD.

It belongs to the potassium channel family. Calcium-activated (TC 1.A.1.3) subfamily. KCa5.1/KCNU1 sub-subfamily. Homotetramer; which constitutes the activated potassium channel. Interacts with LRRC52; this interaction changes channel gating properties, such as shifting gating to more negative potentials at a given pH. In terms of tissue distribution, testis-specific.

It is found in the cell membrane. It localises to the cell projection. Its subcellular location is the cilium. The protein localises to the flagellum membrane. It carries out the reaction K(+)(in) = K(+)(out). Regulated by changes in cytosolic pH; activated by alkalization. Activated by intracellular Ca(2+). Despite strong sequence similarity, human KCNU1 channels are significantly more sensitive to activation by internal Ca(2+) and less pH-sensitive than mouse KCNU1. VU0546110 acts as a selective inhibitor. The auxiliary subunit LRRC52 shifts the activation of KCNU1 to more negative potentials at a given pH. Its function is as follows. Testis-specific potassium channel activated by both intracellular pH and membrane voltage that mediates export of K(+). Represents the primary spermatozoan K(+) current. The channel underlies a pH-triggered membrane hyperpolarization during the process of sperm capacitation, as sperm encounter the alkaline environment near the ovum in the female reproductive tract, thereby playing an essential for male fertility. This chain is Potassium channel subfamily U member 1, found in Homo sapiens (Human).